Here is a 384-residue protein sequence, read N- to C-terminus: 4-hydroxy-3-methylbut-2-en-1-yl diphosphate synthase (flavodoxin) (384 aa).

[4Fe-4S] cluster contacts are provided by Cys280, Cys283, Cys315, and Glu322.

The protein belongs to the IspG family. It depends on [4Fe-4S] cluster as a cofactor.

It carries out the reaction (2E)-4-hydroxy-3-methylbut-2-enyl diphosphate + oxidized [flavodoxin] + H2O + 2 H(+) = 2-C-methyl-D-erythritol 2,4-cyclic diphosphate + reduced [flavodoxin]. The protein operates within isoprenoid biosynthesis; isopentenyl diphosphate biosynthesis via DXP pathway; isopentenyl diphosphate from 1-deoxy-D-xylulose 5-phosphate: step 5/6. Converts 2C-methyl-D-erythritol 2,4-cyclodiphosphate (ME-2,4cPP) into 1-hydroxy-2-methyl-2-(E)-butenyl 4-diphosphate. This Parafrankia sp. (strain EAN1pec) protein is 4-hydroxy-3-methylbut-2-en-1-yl diphosphate synthase (flavodoxin).